A 122-amino-acid chain; its full sequence is Small ribosomal subunit protein uS13 (122 aa).

Residues Arg-99–Lys-122 form a disordered region.

Belongs to the universal ribosomal protein uS13 family. Part of the 30S ribosomal subunit. Forms a loose heterodimer with protein S19. Forms two bridges to the 50S subunit in the 70S ribosome.

Functionally, located at the top of the head of the 30S subunit, it contacts several helices of the 16S rRNA. In the 70S ribosome it contacts the 23S rRNA (bridge B1a) and protein L5 of the 50S subunit (bridge B1b), connecting the 2 subunits; these bridges are implicated in subunit movement. Contacts the tRNAs in the A and P-sites. In Bradyrhizobium sp. (strain BTAi1 / ATCC BAA-1182), this protein is Small ribosomal subunit protein uS13.